An 88-amino-acid chain; its full sequence is LYR motif-containing protein 2 (88 aa).

Residues 1 to 19 (MATSRLPPATLTLKQFMRR) constitute a mitochondrion transit peptide.

Belongs to the complex I LYR family.

Its subcellular location is the mitochondrion. Its function is as follows. Involved in efficient integration of the N-module into mitochondrial respiratory chain complex I. In Bos taurus (Bovine), this protein is LYR motif-containing protein 2 (LYRM2).